Reading from the N-terminus, the 786-residue chain is Kazrin-A (786 aa).

Residues 44–70 (EEPGEPQEHQQQQQQQNHQDAPVQRQK) are disordered. Low complexity predominate over residues 52-62 (HQQQQQQQNHQ). Residues 92 to 270 (LLHEEVLRLQ…SLATLTKDVP (179 aa)) are a coiled coil. A disordered region spans residues 350–425 (MSDASVMEGE…LFDDSDSLSS (76 aa)). SAM domains follow at residues 457 to 522 (WRAG…YRDA), 535 to 599 (DHHW…LHTL), and 623 to 686 (WTCQ…SEEM). The tract at residues 703 to 760 (PLGTPPTLHRQSSLSSSSPSCHDDQQSLRRVKQQLGLSPKNLTARNISHQSRSGSFPR) is disordered. Polar residues predominate over residues 742 to 758 (KNLTARNISHQSRSGSF).

Belongs to the kazrin family.

In Danio rerio (Zebrafish), this protein is Kazrin-A (kazna).